The following is a 224-amino-acid chain: 7-cyano-7-deazaguanine synthase (224 aa).

Position 12 to 22 (12 to 22 (LSGGLDSSTVT)) interacts with ATP. 4 residues coordinate Zn(2+): Cys193, Cys201, Cys204, and Cys207.

It belongs to the QueC family. Zn(2+) is required as a cofactor.

The enzyme catalyses 7-carboxy-7-deazaguanine + NH4(+) + ATP = 7-cyano-7-deazaguanine + ADP + phosphate + H2O + H(+). It participates in purine metabolism; 7-cyano-7-deazaguanine biosynthesis. Functionally, catalyzes the ATP-dependent conversion of 7-carboxy-7-deazaguanine (CDG) to 7-cyano-7-deazaguanine (preQ(0)). This Prochlorococcus marinus (strain MIT 9515) protein is 7-cyano-7-deazaguanine synthase.